Consider the following 299-residue polypeptide: 4-diphosphocytidyl-2-C-methyl-D-erythritol kinase (299 aa).

Lysine 16 is an active-site residue. 101-111 (PVAAGIGGGSA) is an ATP binding site. Residue aspartate 143 is part of the active site.

This sequence belongs to the GHMP kinase family. IspE subfamily.

The enzyme catalyses 4-CDP-2-C-methyl-D-erythritol + ATP = 4-CDP-2-C-methyl-D-erythritol 2-phosphate + ADP + H(+). It participates in isoprenoid biosynthesis; isopentenyl diphosphate biosynthesis via DXP pathway; isopentenyl diphosphate from 1-deoxy-D-xylulose 5-phosphate: step 3/6. Functionally, catalyzes the phosphorylation of the position 2 hydroxy group of 4-diphosphocytidyl-2C-methyl-D-erythritol. In Rhodopseudomonas palustris (strain ATCC BAA-98 / CGA009), this protein is 4-diphosphocytidyl-2-C-methyl-D-erythritol kinase.